Here is a 263-residue protein sequence, read N- to C-terminus: MFLVNSFLKGGGGGGGGGGLGGGLGNVLGGLISGAGGGGGGGGGGGGGGGGTAMRILGGVISAISEAAAQYNPEPVPPRTHYSNIEANESEEVRQFRRLFAQLAGDDMEVSATELMNILNKVVTRHPDLKTDGFGIDTCRSMVAVMDSDTTGKLGFEEFKYLWNNIKKWQAVYKQFDVDRSGTIGSSELPGAFEAAGFRLNEHLYNMIIRRYSDEGGNMDFDNFISCLVRLDAMFRAFKSLDKDGTGQIQVNIQEWLQLTMYS.

Met1 carries the N-acetylmethionine modification. Ser6 bears the Phosphoserine mark. One can recognise an EF-hand 1; atypical domain in the interval Glu91 to Arg125. Positions 104, 107, 109, 114, 132, 147, 149, 151, 153, and 158 each coordinate Ca(2+). 4 EF-hand domains span residues Phe134–Lys167, Asn164–Arg199, Leu200–Leu228, and Val229–Ser263. An N6-acetyllysine modification is found at Lys174. Ca(2+) is bound by residues Asp177, Asp179, Ser181, Thr183, Glu188, and Asp220.

As to quaternary structure, homodimer or heterodimer of a large (catalytic) and a small (regulatory) subunit. In presence of calcium, the heterodimer dissociates.

It localises to the cytoplasm. Its subcellular location is the cell membrane. Regulatory subunit of the calcium-regulated non-lysosomal thiol-protease which catalyzes limited proteolysis of substrates involved in cytoskeletal remodeling and signal transduction. Essential for embryonic development. In Bos taurus (Bovine), this protein is Calpain small subunit 1 (CAPNS1).